A 103-amino-acid polypeptide reads, in one-letter code: Small ribosomal subunit protein uS10 (103 aa).

Belongs to the universal ribosomal protein uS10 family. As to quaternary structure, part of the 30S ribosomal subunit.

Involved in the binding of tRNA to the ribosomes. This chain is Small ribosomal subunit protein uS10, found in Haemophilus ducreyi (strain 35000HP / ATCC 700724).